A 217-amino-acid polypeptide reads, in one-letter code: Growth hormone variant (217 aa).

The N-terminal stretch at 1–26 (MAAGSWTCLILAIALLCLPWLQEGSA) is a signal peptide. 2 disulfide bridges follow: Cys79/Cys191 and Cys208/Cys215. 2 positions are modified to phosphoserine: Ser132 and Ser176.

It belongs to the somatotropin/prolactin family. Expressed in the placenta.

Its subcellular location is the secreted. In terms of biological role, plays an important role in growth control. Its major role in stimulating body growth is to stimulate the liver and other tissues to secrete IGF1. It stimulates both the differentiation and proliferation of myoblasts. It also stimulates amino acid uptake and protein synthesis in muscle and other tissues. This is Growth hormone variant (GH2) from Macaca mulatta (Rhesus macaque).